A 299-amino-acid chain; its full sequence is tRNA uridine(34) hydroxylase (299 aa).

A Rhodanese domain is found at 132-226 (AGRPVVMLDT…YFEEVGGAHY (95 aa)). Catalysis depends on Cys-186, which acts as the Cysteine persulfide intermediate.

This sequence belongs to the TrhO family.

The catalysed reaction is uridine(34) in tRNA + AH2 + O2 = 5-hydroxyuridine(34) in tRNA + A + H2O. In terms of biological role, catalyzes oxygen-dependent 5-hydroxyuridine (ho5U) modification at position 34 in tRNAs. This chain is tRNA uridine(34) hydroxylase, found in Burkholderia pseudomallei (strain 1106a).